The chain runs to 309 residues: Carbamate kinase-like protein (309 aa).

The tract at residues 125 to 144 is disordered; that stretch reads NKPVGPFYNTEETARSANPN.

This sequence belongs to the carbamate kinase family.

The chain is Carbamate kinase-like protein from Mycoplasma pneumoniae (strain ATCC 29342 / M129 / Subtype 1) (Mycoplasmoides pneumoniae).